Consider the following 504-residue polypeptide: WD repeat-containing protein 55 homolog (504 aa).

A compositionally biased stretch (acidic residues) spans 32–49 (QEVVNESDSEIGEYDLGD). Residues 32–135 (QEVVNESDSE…NAFDMDEDDE (104 aa)) are disordered. The span at 66–76 (DSISSDGSFNP) shows a compositional bias: polar residues. The span at 77–95 (NDEDSDTDSDDSMLDEPDE) shows a compositional bias: acidic residues. Positions 114 to 124 (SGSSNRNQDSD) are enriched in polar residues. 6 WD repeats span residues 158–197 (KLED…NKLL), 202–241 (VHAK…LKKL), 245–283 (AHDD…SIFE), 286–325 (EIED…LYVQ), 328–367 (PYEE…YHCD), and 412–451 (QHNM…DFGD). Residues 484–504 (AKEDNNDNENDDATAGPSNTT) form a disordered region.

Belongs to the WD repeat WDR55 family.

This is WD repeat-containing protein 55 homolog from Drosophila willistoni (Fruit fly).